The primary structure comprises 764 residues: Kinesin-like protein KIN-14N (764 aa).

The interval methionine 1–alanine 50 is disordered. A compositionally biased stretch (low complexity) spans alanine 29–alanine 50. Residues alanine 105 to lysine 416 adopt a coiled-coil conformation. One can recognise a Kinesin motor domain in the interval asparagine 418 to cysteine 747. Glycine 498–threonine 505 contributes to the ATP binding site.

Belongs to the TRAFAC class myosin-kinesin ATPase superfamily. Kinesin family. KIN-14 subfamily.

In Oryza sativa subsp. japonica (Rice), this protein is Kinesin-like protein KIN-14N.